Consider the following 400-residue polypeptide: Ornithine aminotransferase (400 aa).

Lysine 254 carries the N6-(pyridoxal phosphate)lysine modification.

It belongs to the class-III pyridoxal-phosphate-dependent aminotransferase family. OAT subfamily. Pyridoxal 5'-phosphate serves as cofactor.

The protein resides in the cytoplasm. The enzyme catalyses a 2-oxocarboxylate + L-ornithine = L-glutamate 5-semialdehyde + an L-alpha-amino acid. It participates in amino-acid biosynthesis; L-proline biosynthesis; L-glutamate 5-semialdehyde from L-ornithine: step 1/1. Catalyzes the interconversion of ornithine to glutamate semialdehyde. The chain is Ornithine aminotransferase from Exiguobacterium sp. (strain ATCC BAA-1283 / AT1b).